Reading from the N-terminus, the 295-residue chain is Shikimate dehydrogenase (NADP(+)) (295 aa).

Residues 18–20 (SRS) and Thr-66 each bind shikimate. The active-site Proton acceptor is the Lys-70. Shikimate contacts are provided by Asn-91 and Asp-106. Residues 130 to 134 (GNGGA) and Met-235 contribute to the NADP(+) site. Residue Tyr-237 coordinates shikimate. Gly-258 is an NADP(+) binding site.

It belongs to the shikimate dehydrogenase family. In terms of assembly, homodimer.

The catalysed reaction is shikimate + NADP(+) = 3-dehydroshikimate + NADPH + H(+). The protein operates within metabolic intermediate biosynthesis; chorismate biosynthesis; chorismate from D-erythrose 4-phosphate and phosphoenolpyruvate: step 4/7. Involved in the biosynthesis of the chorismate, which leads to the biosynthesis of aromatic amino acids. Catalyzes the reversible NADPH linked reduction of 3-dehydroshikimate (DHSA) to yield shikimate (SA). This is Shikimate dehydrogenase (NADP(+)) from Chlorobium phaeobacteroides (strain DSM 266 / SMG 266 / 2430).